We begin with the raw amino-acid sequence, 549 residues long: Cation/acetate symporter ActP (549 aa).

Transmembrane regions (helical) follow at residues 33 to 53 (WQAI…TYWA), 77 to 97 (LAIA…ALVF), 103 to 123 (GLIY…LIAE), 148 to 168 (ILSA…QMVG), 183 to 203 (IAVV…GMLA), 206 to 226 (WVQI…AFMV), 262 to 282 (ISAL…PHIL), 303 to 323 (GFMG…IMLV), 355 to 375 (LFLG…VAGL), 404 to 424 (VSKI…FLFE), 428 to 448 (IAFM…PIIL), 464 to 484 (GGWL…TIWV), and 493 to 513 (IFPY…GIWF).

This sequence belongs to the sodium:solute symporter (SSF) (TC 2.A.21) family.

It is found in the cell inner membrane. In terms of biological role, transports acetate. In Salmonella paratyphi C (strain RKS4594), this protein is Cation/acetate symporter ActP.